The sequence spans 510 residues: Bifunctional pantoate ligase/cytidylate kinase (510 aa).

The pantoate--beta-alanine ligase stretch occupies residues M1 to V276. M29 to H36 lines the ATP pocket. The active-site Proton donor is H36. Q61 serves as a coordination point for (R)-pantoate. Residue Q61 participates in beta-alanine binding. G150 to D153 contributes to the ATP binding site. Position 156 (Q156) interacts with (R)-pantoate. An ATP-binding site is contributed by L187–R190. A cytidylate kinase region spans residues F277–R510.

This sequence in the N-terminal section; belongs to the pantothenate synthetase family. It in the C-terminal section; belongs to the cytidylate kinase family. Type 1 subfamily.

The protein localises to the cytoplasm. The catalysed reaction is (R)-pantoate + beta-alanine + ATP = (R)-pantothenate + AMP + diphosphate + H(+). It catalyses the reaction CMP + ATP = CDP + ADP. It carries out the reaction dCMP + ATP = dCDP + ADP. It functions in the pathway cofactor biosynthesis; (R)-pantothenate biosynthesis; (R)-pantothenate from (R)-pantoate and beta-alanine: step 1/1. In terms of biological role, catalyzes the condensation of pantoate with beta-alanine in an ATP-dependent reaction via a pantoyl-adenylate intermediate. Its function is as follows. Catalyzes the transfer of a phosphate group from ATP to either CMP or dCMP to form CDP or dCDP and ADP, respectively. In Prochlorococcus marinus (strain MIT 9312), this protein is Bifunctional pantoate ligase/cytidylate kinase.